We begin with the raw amino-acid sequence, 463 residues long: Xanthone prenyltransferase B (463 aa).

It belongs to the tryptophan dimethylallyltransferase family.

It functions in the pathway secondary metabolite biosynthesis. With respect to regulation, mn(2+) and Co(2+) strongly enhance prenylation activity. Dehydrogenase involved in the conversion of monodictyphenone to the prenyl xanthones such as emericellin, shamixanthone and epishamixanthone. Monodictyphenone is first converted to variecoxanthone A via a paeciloxanthone intermediate by the consecutive actions of the FAD-dependent monooxygenase mdpD and the xanthone prenyltransferase xptB. XptB catalyzes regular O-prenylation at the hydroxy group of C-7 of the xanthone ring. Variecoxanthone A is further prenylated to emericellin by xptA before being reduced to shamixanthone and epishamixanthone by the dehydrogenase xptC. The chain is Xanthone prenyltransferase B from Emericella nidulans (strain FGSC A4 / ATCC 38163 / CBS 112.46 / NRRL 194 / M139) (Aspergillus nidulans).